We begin with the raw amino-acid sequence, 529 residues long: MATTATCTRFTDDYQLFEELGKGAFSVVRRCVKKTSTQEYAAKIINTKKLSARDHQKLEREARICRLLKHPNIVRLHDSISEEGFHYLVFDLVTGGELFEDIVAREYYSEADASHCIHQILESVNHIHQHDIVHRDLKPENLLLASKCKGAAVKLADFGLAIEVQGEQQAWFGFAGTPGYLSPEVLRKDPYGKPVDIWACGVILYILLVGYPPFWDEDQHKLYQQIKAGAYDFPSPEWDTVTPEAKNLINQMLTINPAKRITADQALKHPWVCQRSTVASMMHRQETVECLRKFNARRKLKGAILTTMLVSRNFSAAKSLLNKKSDGGVKKRKSSSSVHLMPQSNNKNSLVSPAQEPAPLQTAMEPQTTVVHNATDGIKGSTESCNTTTEDEDLKVRKQEIIKITEQLIEAINNGDFEAYTKICDPGLTSFEPEALGNLVEGMDFHKFYFENLLSKNSKPIHTTILNPHVHVIGEDAACIAYIRLTQYIDGQGRPRTSQSEETRVWHRRDGKWLNVHYHCSGAPAAPLQ.

The region spanning Tyr14–Val272 is the Protein kinase domain. ATP is bound by residues Leu20–Val28 and Lys43. Residue Asp136 is the Proton acceptor of the active site. The interval His283–Arg292 is autoinhibitory domain. Phosphothreonine; by autocatalysis occurs at positions 287, 306, and 307. A calmodulin-binding region spans residues Phe294 to Ala316. Phosphoserine occurs at positions 311, 334, 349, 352, and 455. Positions Lys324–Pro353 are disordered. The segment covering Pro342–Ser352 has biased composition (polar residues).

The protein belongs to the protein kinase superfamily. CAMK Ser/Thr protein kinase family. CaMK subfamily. CAMK2 is composed of 4 different chains: alpha (CAMK2A), beta (CAMK2B), gamma (CAMK2G), and delta (CAMK2D). The different isoforms assemble into homo- or heteromultimeric holoenzymes composed of 12 subunits with two hexameric rings stacked one on top of the other. Post-translationally, autophosphorylation of Thr-287 following activation by Ca(2+)/calmodulin. Phosphorylation of Thr-287 locks the kinase into an activated state.

Its subcellular location is the sarcoplasmic reticulum membrane. It carries out the reaction L-seryl-[protein] + ATP = O-phospho-L-seryl-[protein] + ADP + H(+). The enzyme catalyses L-threonyl-[protein] + ATP = O-phospho-L-threonyl-[protein] + ADP + H(+). With respect to regulation, activated by Ca(2+)/calmodulin. Binding of calmodulin results in conformational change that relieves intrasteric autoinhibition and allows autophosphorylation of Thr-287 which turns the kinase in a constitutively active form and confers to the kinase a Ca(2+)-independent activity. In terms of biological role, calcium/calmodulin-dependent protein kinase that functions autonomously after Ca(2+)/calmodulin-binding and autophosphorylation, and is involved in sarcoplasmic reticulum Ca(2+) transport in skeletal muscle and may function in dendritic spine and synapse formation and neuronal plasticity. In slow-twitch muscles, is involved in regulation of sarcoplasmic reticulum (SR) Ca(2+) transport and in fast-twitch muscle participates in the control of Ca(2+) release from the SR through phosphorylation of the ryanodine receptor-coupling factor triadin. In the central nervous system, it is involved in the regulation of neurite formation and arborization. It may participate in the promotion of dendritic spine and synapse formation and maintenance of synaptic plasticity which enables long-term potentiation (LTP) and hippocampus-dependent learning. In response to interferon-gamma (IFN-gamma) stimulation, catalyzes phosphorylation of STAT1, stimulating the JAK-STAT signaling pathway. This Mus musculus (Mouse) protein is Calcium/calmodulin-dependent protein kinase type II subunit gamma (Camk2g).